We begin with the raw amino-acid sequence, 115 residues long: uncharacterized protein (115 aa).

The Cytoplasmic portion of the chain corresponds to 1–11 (MKLTKEKKNDC). The helical transmembrane segment at 12-32 (LVGVSYIPPLNFFTLTFLFLL) threads the bilayer. At 33–52 (RIEKVHLSLSLSLSLSLRFY) the chain is on the extracellular side. A helical membrane pass occupies residues 53 to 73 (YFHNVCYPSLFLFFCFVIPFF). Topologically, residues 74-78 (YSVRF) are cytoplasmic. Residues 79–98 (ILLYLHILRSFYELNILLLY) traverse the membrane as a helical segment. At 99 to 115 (GAENSRRQSPPGYYVIR) the chain is on the extracellular side.

The protein localises to the membrane. This is an uncharacterized protein from Saccharomyces cerevisiae (strain ATCC 204508 / S288c) (Baker's yeast).